Reading from the N-terminus, the 700-residue chain is Polyribonucleotide nucleotidyltransferase (700 aa).

Positions 485 and 491 each coordinate Mg(2+). The region spanning 552-611 is the KH domain; sequence PRITVIKINPEKIRDVIGKGGAVIRALTEETGTTIELEDDGTVKIASSNGEATKEAIRRI. Positions 621-689 constitute an S1 motif domain; sequence GRIYNGKVIR…RQGRVRLSIK (69 aa).

The protein belongs to the polyribonucleotide nucleotidyltransferase family. In terms of assembly, component of the RNA degradosome, which is a multiprotein complex involved in RNA processing and mRNA degradation. The cofactor is Mg(2+).

The protein localises to the cytoplasm. The catalysed reaction is RNA(n+1) + phosphate = RNA(n) + a ribonucleoside 5'-diphosphate. In terms of biological role, involved in mRNA degradation. Catalyzes the phosphorolysis of single-stranded polyribonucleotides processively in the 3'- to 5'-direction. The protein is Polyribonucleotide nucleotidyltransferase of Shewanella baltica (strain OS185).